The following is a 314-amino-acid chain: GDSL-like esterase Rv1075c (314 aa).

The N-terminal stretch at 1–21 (MPRRSTIALATAGALASTGTA) is a signal peptide. The active-site Nucleophile is Ser-80. Catalysis depends on Asp-244, which acts as the Proton donor. Residue His-247 is the Proton acceptor of the active site. The segment at 276–314 (IHETPSRPGTATLEPGHTRHSMMSRLRRPRPARAVPTGG) is disordered. A compositionally biased stretch (basic residues) spans 293-306 (TRHSMMSRLRRPRP).

Belongs to the 'GDSL' lipolytic enzyme family.

It carries out the reaction an acetyl ester + H2O = an aliphatic alcohol + acetate + H(+). The enzyme catalyses a butanoate ester + H2O = an aliphatic alcohol + butanoate + H(+). It catalyses the reaction triacetin + H2O = diacetylglycerol + acetate + H(+). The catalysed reaction is 1,2,3-tributanoylglycerol + H2O = dibutanoylglycerol + butanoate + H(+). With respect to regulation, esterase activity is significantly inhibited by the serine modifier phenylmethylsulfonyl fluoride (PMSF). Completely inhibited by diethyl pyrocarbonate. Functionally, esterase that preferentially hydrolyzes short-chain fatty acids, particularly pNP-acetate (C2) and pNP-butyrate (C4). Also has weak activity with pNP-hexanoate (C6) and pNP-octanoate (C8). It can also hydrolyze short-chain tryglycerides such as triacetin and tributyrin. Important for intracellular survival. This Mycobacterium tuberculosis (strain ATCC 25618 / H37Rv) protein is GDSL-like esterase Rv1075c.